The chain runs to 424 residues: MFS-type transporter opdF (424 aa).

A compositionally biased stretch (basic and acidic residues) spans 1-10; sequence MSDTSLEKGN. The segment at 1 to 23 is disordered; sequence MSDTSLEKGNEGPTAEAPKVAPP. Helical transmembrane passes span 36-56, 102-122, 127-147, 160-180, and 187-207; these read VAGASVALFVSFGWVNCIALF, VPIAIGSFLHVFGLMMASLST, LMLSQSVVSGIGSSLIFTPAM, IVGGLTVAGSSLGGVVFPLMV, and VGFGWTMRICAFMILGLLVFA. Asn-208 carries N-linked (GlcNAc...) asparagine glycosylation. Transmembrane regions (helical) follow at residues 239–259, 265–285, 299–319, 329–349, 364–384, and 391–411; these read LCVASFFMYWGIFIPFDYIVV, GMSTQMAWSLVPILNGASFFG, FNVMIVMTTLSAILVLALWLP, FAALFGITSGAIIGLGPVLIV, VLAFAAVGTLTSPPIGGAIAA, and TYTCVFSGVSFLIGTLGLAAL.

It belongs to the major facilitator superfamily. Monocarboxylate porter (TC 2.A.1.13) family.

The protein localises to the membrane. Functionally, MFS-type transporter; part of the gene cluster that mediates the biosynthesis of oxopyrrolidines, polyketide-amino acid hybrid compounds with feature structures of tetramic acid. In Penicillium oxalicum (strain 114-2 / CGMCC 5302) (Penicillium decumbens), this protein is MFS-type transporter opdF.